Consider the following 598-residue polypeptide: Probable polysaccharide biosynthesis protein EpsC (598 aa).

The next 4 helical transmembrane spans lie at 1–21, 31–51, 63–83, and 87–107; these read MIIALDTYLVLNSVIAGYQFL, GALLLTAVSLLLSYHVCAFLF, LGELIVLLKGITLSAAVTGVI, and VYHTMFFRLLTACWVLQLLSI.

It belongs to the polysaccharide synthase family.

The protein localises to the cell membrane. Its function is as follows. Involved in biofilm formation. The chain is Probable polysaccharide biosynthesis protein EpsC (epsC) from Bacillus subtilis (strain 168).